Consider the following 1806-residue polypeptide: Atrochrysone carboxylic acid synthase (1806 aa).

The tract at residues 30–283 (DLQGLFRRLY…SLPVYSGLCH (254 aa)) is N-terminal acylcarrier protein transacylase domain (SAT). One can recognise a Ketosynthase family 3 (KS3) domain in the interval 416–850 (QSKIAIIGMS…GGNTTVCLEE (435 aa)). Residues Cys589, His725, and His768 each act as for beta-ketoacyl synthase activity in the active site. The interval 951–1270 (FAFTGQGASY…SLTALHCAGV (320 aa)) is malonyl-CoA:ACP transacylase (MAT) domain. Residues 1340–1659 (TSTVQQIIEE…RILLNRFFTA (320 aa)) form a product template (PT) domain region. The N-terminal hotdog fold stretch occupies residues 1344–1479 (QQIIEESFNG…ASILYDDAAL (136 aa)). The region spanning 1344–1654 (QQIIEESFNG…FRRYPRILLN (311 aa)) is the PKS/mFAS DH domain. The active-site Proton acceptor; for dehydratase activity is the His1376. Residues 1506–1654 (IANRFTRNMA…FRRYPRILLN (149 aa)) are C-terminal hotdog fold. Asp1565 serves as the catalytic Proton donor; for dehydratase activity. The interval 1668-1726 (HAAASSTPAPRTKPEPVPVATPATAAAPVAQSPAAPASVTPAPAPAPAPGPTPAAAPAA) is disordered. Residues 1685–1708 (PVATPATAAAPVAQSPAAPASVTP) are compositionally biased toward low complexity. A compositionally biased stretch (pro residues) spans 1709–1721 (APAPAPAPGPTPA). Positions 1728 to 1805 (GESDSVAAKA…DLRSWLLEYY (78 aa)) constitute a Carrier domain. Position 1765 is an O-(pantetheine 4'-phosphoryl)serine (Ser1765).

It catalyses the reaction holo-[ACP] + 8 malonyl-CoA + 8 H(+) = atrochrysone carboxyl-[ACP] + 8 CO2 + 8 CoA + 2 H2O. Its pathway is secondary metabolite biosynthesis. In terms of biological role, atrochrysone carboxylic acid synthase; part of the gene cluster that mediates the biosynthesis of monodictyphenone, a prenyl xanthone derivative. The pathway begins with the synthesis of atrochrysone thioester by the polyketide synthase (PKS) mdpG. The atrochrysone carboxyl ACP thioesterase mdpF then breaks the thioester bond and releases the atrochrysone carboxylic acid from mdpG. The atrochrysone carboxylic acid is then converted to atrochrysone which is further transformed into emodin anthrone. The next step is performed by the anthrone oxygenase mdpH that catalyzes the oxidation of emodinanthrone to emodin. Emodin is further modified to yield monodictyphenone via several steps involving mdpB, mdpC mdpJ, mdpK and mdpL. The short chain dehydrogenase mdpC converts the tautomers of emodin hydroquinone into the 3-hydroxy-3,4-dihydroan-thracen-1(2H)-one derivative. These enzymes with xptA, xptB and xptC are also proposed to be involved in the synthesis of shamixanthone from emodin. Especially, direct reduction of emodin by the short chain dehydrogenase mdpC followed by dehydration catalyzed by the scytalone dehydratase-like protein mdpB gives loss of oxygen and formation of chrysophanol intermediate in two simple steps. The polypeptide is Atrochrysone carboxylic acid synthase (Emericella nidulans (strain FGSC A4 / ATCC 38163 / CBS 112.46 / NRRL 194 / M139) (Aspergillus nidulans)).